The sequence spans 250 residues: Sulfate transporter CysZ (250 aa).

4 helical membrane-spanning segments follow: residues 27–47 (FVVLPLLANIILVGGAMYYLF), 64–84 (FLSWLSYVLWPLLALTILATF), 150–170 (FLLLLIPALGQTLGPIAWFLF), and 210–230 (MLVAFFTSIPIVNLFIVPVAV).

Belongs to the CysZ family.

The protein localises to the cell inner membrane. High affinity, high specificity proton-dependent sulfate transporter, which mediates sulfate uptake. Provides the sulfur source for the cysteine synthesis pathway. The polypeptide is Sulfate transporter CysZ (Vibrio cholerae serotype O1 (strain ATCC 39541 / Classical Ogawa 395 / O395)).